Reading from the N-terminus, the 236-residue chain is 7-cyano-7-deazaguanine synthase (236 aa).

Residue 7-17 coordinates ATP; the sequence is CSGGLDSVSLA. Residues cysteine 185, cysteine 193, cysteine 196, and cysteine 199 each coordinate Zn(2+).

This sequence belongs to the QueC family. It depends on Zn(2+) as a cofactor.

It carries out the reaction 7-carboxy-7-deazaguanine + NH4(+) + ATP = 7-cyano-7-deazaguanine + ADP + phosphate + H2O + H(+). It participates in purine metabolism; 7-cyano-7-deazaguanine biosynthesis. Catalyzes the ATP-dependent conversion of 7-carboxy-7-deazaguanine (CDG) to 7-cyano-7-deazaguanine (preQ(0)). The protein is 7-cyano-7-deazaguanine synthase of Rhizobium etli (strain CIAT 652).